The following is a 424-amino-acid chain: DNA primase DnaG (424 aa).

Positions 166–241 (DTIIIVEGRA…KVDFIARAPE (76 aa)) constitute a Toprim domain. The Mg(2+) site is built by Glu172, Asp215, and Asp217.

The protein belongs to the archaeal DnaG primase family. Forms a ternary complex with MCM helicase and DNA. Component of the archaeal exosome complex. Requires Mg(2+) as cofactor.

The enzyme catalyses ssDNA + n NTP = ssDNA/pppN(pN)n-1 hybrid + (n-1) diphosphate.. Its function is as follows. RNA polymerase that catalyzes the synthesis of short RNA molecules used as primers for DNA polymerase during DNA replication. Also part of the exosome, which is a complex involved in RNA degradation. Acts as a poly(A)-binding protein that enhances the interaction between heteromeric, adenine-rich transcripts and the exosome. This Staphylothermus marinus (strain ATCC 43588 / DSM 3639 / JCM 9404 / F1) protein is DNA primase DnaG.